The chain runs to 185 residues: Elongation factor P (185 aa).

The protein belongs to the elongation factor P family.

The protein resides in the cytoplasm. Its pathway is protein biosynthesis; polypeptide chain elongation. Its function is as follows. Involved in peptide bond synthesis. Stimulates efficient translation and peptide-bond synthesis on native or reconstituted 70S ribosomes in vitro. Probably functions indirectly by altering the affinity of the ribosome for aminoacyl-tRNA, thus increasing their reactivity as acceptors for peptidyl transferase. This is Elongation factor P from Bacillus pumilus (strain SAFR-032).